Consider the following 718-residue polypeptide: Protein spire homolog 2 (718 aa).

Disordered regions lie at residues 1–22 and 143–166; these read MARA…ARPE and DSSC…EGGP. A compositionally biased stretch (low complexity) spans 10–21; sequence AAPERAGGAARP. Residues 26 to 207 form the KIND domain; the sequence is LSLEEVLKVY…RALFVETLEL (182 aa). WH2 domains follow at residues 251–265, 281–299, and 345–362; these read QLMR…LKKV, PFEM…LRKV, and LHEK…LRPV. A Phosphoserine modification is found at serine 374. The disordered stretch occupies residues 397–434; the sequence is TDTGSGSQRPRPRVLLKAPTLAEMEEMNTSEEEESPCG. Residues 419 to 432 are compositionally biased toward acidic residues; the sequence is EMEEMNTSEEEESP. Phosphoserine occurs at positions 443, 445, and 479. The segment at 456–518 is disordered; it reads MASGLQSAAQ…SSLSSVDGPE (63 aa). Over residues 496-513 the composition is skewed to low complexity; the sequence is SGQSQPLPSSALPSSLSS. Positions 538 to 558 are spir-box; it reads LALTVEEVVDVRRVLVKAEME.

This sequence belongs to the spire family. In terms of tissue distribution, detected in oocytes.

It is found in the cytoplasm. Its subcellular location is the cytoskeleton. The protein localises to the cytosol. The protein resides in the cell membrane. It localises to the cytoplasmic vesicle membrane. Acts as an actin nucleation factor, remains associated with the slow-growing pointed end of the new filament. Involved in intracellular vesicle transport along actin fibers, providing a novel link between actin cytoskeleton dynamics and intracellular transport. Required for asymmetric spindle positioning and asymmetric cell division during oocyte meiosis. Required for normal formation of the cleavage furrow and for polar body extrusion during female germ cell meiosis. Also acts in the nucleus: together with SPIRE1 and SPIRE2, promotes assembly of nuclear actin filaments in response to DNA damage in order to facilitate movement of chromatin and repair factors after DNA damage. This Mus musculus (Mouse) protein is Protein spire homolog 2 (Spire2).